The chain runs to 99 residues: Large ribosomal subunit protein uL23 (99 aa).

This sequence belongs to the universal ribosomal protein uL23 family. Part of the 50S ribosomal subunit. Contacts protein L29, and trigger factor when it is bound to the ribosome.

Functionally, one of the early assembly proteins it binds 23S rRNA. One of the proteins that surrounds the polypeptide exit tunnel on the outside of the ribosome. Forms the main docking site for trigger factor binding to the ribosome. This chain is Large ribosomal subunit protein uL23, found in Pseudomonas aeruginosa (strain LESB58).